Reading from the N-terminus, the 109-residue chain is Nucleoid-associated protein AHA_2212 (109 aa).

Disordered stretches follow at residues 1–23 and 88–109; these read MFGKGGMGNLMKQAQQMQERMQK and NKSKMGELTGGMQLPPGFKMPF. Residues 11–23 show a composition bias toward low complexity; that stretch reads MKQAQQMQERMQK.

It belongs to the YbaB/EbfC family. As to quaternary structure, homodimer.

Its subcellular location is the cytoplasm. The protein localises to the nucleoid. In terms of biological role, binds to DNA and alters its conformation. May be involved in regulation of gene expression, nucleoid organization and DNA protection. In Aeromonas hydrophila subsp. hydrophila (strain ATCC 7966 / DSM 30187 / BCRC 13018 / CCUG 14551 / JCM 1027 / KCTC 2358 / NCIMB 9240 / NCTC 8049), this protein is Nucleoid-associated protein AHA_2212.